The following is a 147-amino-acid chain: Nucleoside diphosphate kinase (147 aa).

Positions 11, 59, 87, 93, 104, and 114 each coordinate ATP. H117 serves as the catalytic Pros-phosphohistidine intermediate.

This sequence belongs to the NDK family. In terms of assembly, homotetramer. Mg(2+) serves as cofactor.

Its subcellular location is the cytoplasm. It catalyses the reaction a 2'-deoxyribonucleoside 5'-diphosphate + ATP = a 2'-deoxyribonucleoside 5'-triphosphate + ADP. It carries out the reaction a ribonucleoside 5'-diphosphate + ATP = a ribonucleoside 5'-triphosphate + ADP. Its function is as follows. Major role in the synthesis of nucleoside triphosphates other than ATP. The ATP gamma phosphate is transferred to the NDP beta phosphate via a ping-pong mechanism, using a phosphorylated active-site intermediate. In Anaeromyxobacter sp. (strain K), this protein is Nucleoside diphosphate kinase.